A 274-amino-acid chain; its full sequence is Insulin-like growth factor-binding protein-like 1 (274 aa).

A signal peptide spans 1-21 (MPRSPGLFLLLLVLQPLPALG). The region spanning 30–105 (RNPECGPCRP…PEGTGLCVCA (76 aa)) is the IGFBP N-terminal domain. 7 cysteine pairs are disulfide-bonded: C34-C59, C37-C61, C42-C62, C48-C65, C73-C87, C81-C102, and C111-C147. The Kazal-like domain maps to 91–149 (AAGAAPEGTGLCVCAQRGSVCGSDGRSYPSVCALRLRARQAPRALPGHLHKARDGPCEF). Residues 151-255 (PVVITPPQSV…GEAQSHGTVT (105 aa)) enclose the Ig-like C2-type domain. A glycan (N-linked (GlcNAc...) asparagine) is linked at N162. A disulfide bridge connects residues C172 and C239.

The protein resides in the secreted. Its function is as follows. IGF-binding proteins prolong the half-life of IGFs and have been shown to either inhibit or stimulate the growth promoting effects of the IGFs in cell culture. They alter the interaction of IGFs with their cell surface receptors. The chain is Insulin-like growth factor-binding protein-like 1 (IGFBPL1) from Bos taurus (Bovine).